Consider the following 450-residue polypeptide: Tubulin beta chain (450 aa).

GTP is bound by residues E69, S138, G142, T143, G144, N204, and N226. E69 contacts Mg(2+). Residues 427–450 (DATIDQEFEDEEEVEEQNDDSDEQ) are disordered. Acidic residues predominate over residues 430–450 (IDQEFEDEEEVEEQNDDSDEQ).

It belongs to the tubulin family. In terms of assembly, dimer of alpha and beta chains. A typical microtubule is a hollow water-filled tube with an outer diameter of 25 nm and an inner diameter of 15 nM. Alpha-beta heterodimers associate head-to-tail to form protofilaments running lengthwise along the microtubule wall with the beta-tubulin subunit facing the microtubule plus end conferring a structural polarity. Microtubules usually have 13 protofilaments but different protofilament numbers can be found in some organisms and specialized cells. Mg(2+) serves as cofactor.

It is found in the cytoplasm. The protein resides in the cytoskeleton. Functionally, tubulin is the major constituent of microtubules, a cylinder consisting of laterally associated linear protofilaments composed of alpha- and beta-tubulin heterodimers. Microtubules grow by the addition of GTP-tubulin dimers to the microtubule end, where a stabilizing cap forms. Below the cap, tubulin dimers are in GDP-bound state, owing to GTPase activity of alpha-tubulin. This is Tubulin beta chain from Bombyx mori (Silk moth).